We begin with the raw amino-acid sequence, 146 residues long: Leghemoglobin Lb120-8 (146 aa).

Positions 2 to 146 (GFTEKQEALV…LASAIKKAMN (145 aa)) constitute a Globin domain. Nitrated tyrosine occurs at positions 24 and 29. Ser44 contacts heme b. Ser44 is subject to Phosphoserine. His61 provides a ligand contact to O2. 3 residues coordinate heme b: Lys64, His93, and Lys96. Nitrated tyrosine is present on Tyr134.

Belongs to the plant globin family. Monomer. Post-translationally, nitrated in effective nodules and particularly in hypoxic conditions; this mechanism may play a protective role in the symbiosis by buffering toxic peroxynitrite NO(2)(-). Nitration level decrease during nodule senescence. Phosphorylation at Ser-44 disrupts the molecular environment of its porphyrin ring oxygen binding pocket, thus leading to a reduced oxygen consumption and to the delivery of oxygen O(2) to symbiosomes. In terms of tissue distribution, root nodules.

The protein resides in the cytoplasm. It is found in the cytosol. The protein localises to the nucleus. In terms of biological role, leghemoglobin that reversibly binds oxygen O(2) through a pentacoordinated heme iron. In root nodules, facilitates the diffusion of oxygen to the bacteroids while preventing the bacterial nitrogenase from being inactivated by buffering dioxygen, nitric oxide and carbon monoxide, and promoting the formation of reactive oxygen species (ROS, e.g. H(2)O(2)). This role is essential for symbiotic nitrogen fixation (SNF). The chain is Leghemoglobin Lb120-8 from Pisum sativum (Garden pea).